A 230-amino-acid polypeptide reads, in one-letter code: Mitochondrial fission factor homolog B (230 aa).

Topologically, residues 1–210 (MSGAAFPSPT…ENKERAKREM (210 aa)) are cytoplasmic. Residues 117-153 (EQTSSVSHPSEEVRTQTKTRRERSVSENAGVHHNGPL) form a disordered region. Serine 142 carries the phosphoserine modification. Residues 179–210 (VDATSLRRQIVKLNRRLQLLEEENKERAKREM) adopt a coiled-coil conformation. A helical; Anchor for type IV membrane protein membrane pass occupies residues 211 to 228 (VMYSITVAFWLVNSWVWF). Residues 229–230 (RR) lie on the Extracellular side of the membrane.

The protein belongs to the Tango11 family.

It is found in the mitochondrion outer membrane. Its subcellular location is the peroxisome. Its function is as follows. Plays a role in mitochondrial and peroxisomal fission. Promotes the recruitment and association of the fission mediator dynamin-related protein 1 (DNM1L) to the mitochondrial surface. The chain is Mitochondrial fission factor homolog B from Danio rerio (Zebrafish).